A 266-amino-acid polypeptide reads, in one-letter code: Transcription factor atoh8 (266 aa).

The tract at residues 140 to 164 (AASQAPAGGSERAESPRKRAGEPSG) is disordered. The segment covering 150 to 160 (ERAESPRKRAG) has biased composition (basic and acidic residues). Residues 175-188 (TRRLLANARERTRV) form a basic motif; degenerate region. A bHLH domain is found at 175 to 227 (TRRLLANARERTRVHTISAAFEALRKQVPCYSYGQKLSKLAILRIACNYILSL). Positions 189-227 (HTISAAFEALRKQVPCYSYGQKLSKLAILRIACNYILSL) are helix-loop-helix motif.

The protein localises to the nucleus. The protein resides in the nucleus speckle. It is found in the cytoplasm. Transcription factor that binds a palindromic (canonical) core consensus DNA sequence 5'-CANNTG- 3' known as an E-box element, possibly as a heterodimer with other bHLH proteins. During development, is required for heart looping and swim bladder formation by acting in concert with GATA4 and ZFPM1. During the development of both the retina and skeletal muscles is required for neural retinal cell through modulating PAX6 and NEUROG3 expression and myogenic differentiation. This chain is Transcription factor atoh8, found in Danio rerio (Zebrafish).